Consider the following 3120-residue polypeptide: DNA-directed RNA polymerase subunit beta'' (3120 aa).

Zn(2+) is bound by residues Cys323, Cys396, Cys403, and Cys406. Residues Phe595 to Phe1130 form an insert-1 region. The interval Lys1796–Leu2346 is insert-2. The interval Asn2422 to Thr2610 is insert-3. An insert-4 region spans residues Phe2726 to Leu2801. Positions Ala2856–Asp2996 are insert-5. The tract at residues Glu2926 to Val2956 is disordered. Positions Lys2932–Asn2946 are enriched in polar residues.

This sequence belongs to the RNA polymerase beta' chain family. RpoC2 subfamily. In plastids the minimal PEP RNA polymerase catalytic core is composed of four subunits: alpha, beta, beta', and beta''. When a (nuclear-encoded) sigma factor is associated with the core the holoenzyme is formed, which can initiate transcription. It depends on Zn(2+) as a cofactor.

The protein localises to the plastid. The protein resides in the chloroplast. It carries out the reaction RNA(n) + a ribonucleoside 5'-triphosphate = RNA(n+1) + diphosphate. Its function is as follows. DNA-dependent RNA polymerase catalyzes the transcription of DNA into RNA using the four ribonucleoside triphosphates as substrates. The polypeptide is DNA-directed RNA polymerase subunit beta'' (Chlamydomonas reinhardtii (Chlamydomonas smithii)).